A 440-amino-acid chain; its full sequence is D-serine dehydratase (440 aa).

Lysine 116 is subject to N6-(pyridoxal phosphate)lysine.

This sequence belongs to the serine/threonine dehydratase family. DsdA subfamily. Monomer. Pyridoxal 5'-phosphate is required as a cofactor.

The enzyme catalyses D-serine = pyruvate + NH4(+). This Salmonella agona (strain SL483) protein is D-serine dehydratase.